A 209-amino-acid polypeptide reads, in one-letter code: Large ribosomal subunit protein bL25 (209 aa).

The protein belongs to the bacterial ribosomal protein bL25 family. CTC subfamily. In terms of assembly, part of the 50S ribosomal subunit; part of the 5S rRNA/L5/L18/L25 subcomplex. Contacts the 5S rRNA. Binds to the 5S rRNA independently of L5 and L18.

This is one of the proteins that binds to the 5S RNA in the ribosome where it forms part of the central protuberance. The polypeptide is Large ribosomal subunit protein bL25 (Xanthomonas campestris pv. campestris (strain B100)).